The sequence spans 475 residues: TOM1-like protein 1 (475 aa).

Residues 22 to 154 enclose the VHS domain; sequence ATFAGVQTED…DLLKKGVQFP (133 aa). A disordered region spans residues 155–175; it reads PLDGEPETKQEAGQISPSRPT. A compositionally biased stretch (polar residues) spans 165–175; it reads EAGQISPSRPT. A Phosphoserine modification is found at serine 170. Residues 199–287 enclose the GAT domain; the sequence is EQIGKLHSEL…AILGYERFTR (89 aa). The tract at residues 296–317 is disordered; sequence KRNPTEANQTSSEPSAPSCDLL. A compositionally biased stretch (polar residues) spans 300–310; that stretch reads TEANQTSSEPS. At serine 313 the chain carries Phosphoserine. The interval 392–395 is interaction with GRB2; it reads YDNF. An SH3-binding motif is present at residues 421-425; that stretch reads LPPLP. The segment at 442–445 is interaction with PIK3R1; that stretch reads YEVM. At tyrosine 458 the chain carries Phosphotyrosine. The SH2-binding motif lies at 458-461; sequence YEEI.

It belongs to the TOM1 family. In terms of assembly, interacts with the SH2 and SH3 domains of FYN when phosphorylated. Also interacts with GRB2 and PIK3R1 when phosphorylated. Interacts with LYN. Phosphorylated on tyrosines by FYN and LYN.

The protein localises to the golgi apparatus. It is found in the golgi stack. Its subcellular location is the endosome membrane. The protein resides in the cytoplasm. It localises to the membrane. Its function is as follows. Probable adapter protein involved in signaling pathways. Interacts with the SH2 and SH3 domains of various signaling proteins when it is phosphorylated. May promote FYN activation, possibly by disrupting intramolecular SH3-dependent interactions. This Rattus norvegicus (Rat) protein is TOM1-like protein 1 (Tom1l1).